A 367-amino-acid chain; its full sequence is tRNA/tmRNA (uracil-C(5))-methyltransferase (367 aa).

S-adenosyl-L-methionine-binding residues include Q182, Y210, N215, E231, and D293. Residue C318 is the Nucleophile of the active site. E352 (proton acceptor) is an active-site residue.

This sequence belongs to the class I-like SAM-binding methyltransferase superfamily. RNA M5U methyltransferase family. TrmA subfamily.

The catalysed reaction is uridine(54) in tRNA + S-adenosyl-L-methionine = 5-methyluridine(54) in tRNA + S-adenosyl-L-homocysteine + H(+). It carries out the reaction uridine(341) in tmRNA + S-adenosyl-L-methionine = 5-methyluridine(341) in tmRNA + S-adenosyl-L-homocysteine + H(+). Its function is as follows. Dual-specificity methyltransferase that catalyzes the formation of 5-methyluridine at position 54 (m5U54) in all tRNAs, and that of position 341 (m5U341) in tmRNA (transfer-mRNA). This chain is tRNA/tmRNA (uracil-C(5))-methyltransferase, found in Neisseria meningitidis serogroup C (strain 053442).